Reading from the N-terminus, the 272-residue chain is 3-hydroxyanthranilate 3,4-dioxygenase (272 aa).

The domain A (catalytic) stretch occupies residues 1 to 154; that stretch reads MMEWIDENSS…SEEHKTGKPS (154 aa). Arginine 38 is an O2 binding site. Residues histidine 42, glutamate 48, and histidine 86 each contribute to the Fe cation site. Position 48 (glutamate 48) interacts with substrate. Substrate-binding residues include arginine 90 and glutamate 100. A linker region spans residues 155-169; sequence KESSCSINVDTETEL. Residues 170–272 are domain B; sequence MEPFPLKQWL…SITVDSLANK (103 aa).

The protein belongs to the 3-HAO family. Fe(2+) is required as a cofactor.

The protein localises to the cytoplasm. The enzyme catalyses 3-hydroxyanthranilate + O2 = (2Z,4Z)-2-amino-3-carboxymuconate 6-semialdehyde. Its pathway is cofactor biosynthesis; NAD(+) biosynthesis; quinolinate from L-kynurenine: step 3/3. Its function is as follows. Catalyzes the oxidative ring opening of 3-hydroxyanthranilate to 2-amino-3-carboxymuconate semialdehyde, which spontaneously cyclizes to quinolinate. The sequence is that of 3-hydroxyanthranilate 3,4-dioxygenase from Nematostella vectensis (Starlet sea anemone).